A 700-amino-acid chain; its full sequence is Elongation factor G 1 (700 aa).

The 283-residue stretch at 8-290 folds into the tr-type G domain; the sequence is ERYRNIGISA…AVIDYLPSPA (283 aa). GTP is bound by residues 17 to 24, 88 to 92, and 142 to 145; these read AHIDAGKT, DTPGH, and NKMD.

Belongs to the TRAFAC class translation factor GTPase superfamily. Classic translation factor GTPase family. EF-G/EF-2 subfamily.

Its subcellular location is the cytoplasm. Functionally, catalyzes the GTP-dependent ribosomal translocation step during translation elongation. During this step, the ribosome changes from the pre-translocational (PRE) to the post-translocational (POST) state as the newly formed A-site-bound peptidyl-tRNA and P-site-bound deacylated tRNA move to the P and E sites, respectively. Catalyzes the coordinated movement of the two tRNA molecules, the mRNA and conformational changes in the ribosome. The polypeptide is Elongation factor G 1 (Bordetella parapertussis (strain 12822 / ATCC BAA-587 / NCTC 13253)).